Reading from the N-terminus, the 212-residue chain is MAEKEQIKLVLVGDGGVGKTTFVQRHLTGEFEPRYIPTLGVSVHPLIFYTNFGKIHFNVWDTAGQEKFGGLRDGYYIQGNCAIIMFDVTSRISYKNVPNWHSDLTRVCENIPIVLCGNKVDVKDRKVKPSQIVFHRRYNLSYYDVSAKSNYNFEKPFVWLTSKLLGNKAVTLVQQPTLKLPETVLDSNLMSLYEKEVADAAALPLPEDNDDL.

The 165-residue stretch at 3–167 (EKEQIKLVLV…VWLTSKLLGN (165 aa)) folds into the Small GTPase Ran-type domain. Residue 14–21 (DGGVGKTT) participates in GTP binding. Residues 33–41 (PRYIPTLGV) are switch-I. GTP-binding positions include G64, 118–121 (NKVD), and 146–148 (SAK). Residues 64–80 (GQEKFGGLRDGYYIQGN) are switch-II.

It belongs to the small GTPase superfamily. Ran family. Found in a nuclear export complex with RanGTP, exportin and pre-miRNA.

It is found in the nucleus. Its function is as follows. GTP-binding protein involved in nucleocytoplasmic transport. Required for the import of protein into the nucleus and also for RNA export. Involved in chromatin condensation and control of cell cycle. This chain is GTP-binding nuclear protein Ran (ranA), found in Dictyostelium discoideum (Social amoeba).